A 468-amino-acid polypeptide reads, in one-letter code: POC1 centriolar protein homolog B (468 aa).

WD repeat units lie at residues 16-55, 58-97, 100-139, 142-181, 184-223, 226-265, and 268-307; these read GHKD…RAYK, GHKE…ESTV, AHTA…FLFS, QHTN…CINT, DYKG…LLQH, VHNA…LIYT, and GHQG…YSVK. The stretch at 420–459 forms a coiled coil; the sequence is NTLEQIVDQLNVLTQTVSILEHRLTLTEDKLKECLENQQK.

This sequence belongs to the WD repeat POC1 family. As to quaternary structure, interacts with pat. Highly expressed in ovary and, at low levels, in testis.

It is found in the cytoplasm. It localises to the cytoskeleton. The protein resides in the microtubule organizing center. The protein localises to the centrosome. Its subcellular location is the centriole. Functionally, plays an important role in centriole assembly and/or stability and ciliogenesis. Involved in early steps of centriole duplication, as well as in the later steps of centriole length control. In Xenopus laevis (African clawed frog), this protein is POC1 centriolar protein homolog B (poc1b).